A 76-amino-acid chain; its full sequence is RNA-binding protein KhpA (76 aa).

One can recognise a KH domain in the interval 29-76 (SLHIELSVHPDDMGKVIGKQGRTAKALRSVVYAAATKQKRRVRLDIID).

This sequence belongs to the KhpA RNA-binding protein family. Forms a complex with KhpB.

Its subcellular location is the cytoplasm. Functionally, a probable RNA chaperone. Forms a complex with KhpB which binds to cellular RNA and controls its expression. Plays a role in peptidoglycan (PG) homeostasis and cell length regulation. This chain is RNA-binding protein KhpA, found in Halalkalibacterium halodurans (strain ATCC BAA-125 / DSM 18197 / FERM 7344 / JCM 9153 / C-125) (Bacillus halodurans).